Consider the following 296-residue polypeptide: Fructose-bisphosphate aldolase class 1 (296 aa).

The active-site Proton acceptor is glutamate 175. Catalysis depends on lysine 212, which acts as the Schiff-base intermediate with dihydroxyacetone-P.

It belongs to the class I fructose-bisphosphate aldolase family.

It carries out the reaction beta-D-fructose 1,6-bisphosphate = D-glyceraldehyde 3-phosphate + dihydroxyacetone phosphate. The protein operates within carbohydrate degradation; glycolysis; D-glyceraldehyde 3-phosphate and glycerone phosphate from D-glucose: step 4/4. The chain is Fructose-bisphosphate aldolase class 1 (fda) from Staphylococcus epidermidis (strain ATCC 12228 / FDA PCI 1200).